We begin with the raw amino-acid sequence, 179 residues long: Large ribosomal subunit protein uL5 (179 aa).

This sequence belongs to the universal ribosomal protein uL5 family. As to quaternary structure, part of the 50S ribosomal subunit; part of the 5S rRNA/L5/L18/L25 subcomplex. Contacts the 5S rRNA and the P site tRNA. Forms a bridge to the 30S subunit in the 70S ribosome.

This is one of the proteins that bind and probably mediate the attachment of the 5S RNA into the large ribosomal subunit, where it forms part of the central protuberance. In the 70S ribosome it contacts protein S13 of the 30S subunit (bridge B1b), connecting the 2 subunits; this bridge is implicated in subunit movement. Contacts the P site tRNA; the 5S rRNA and some of its associated proteins might help stabilize positioning of ribosome-bound tRNAs. The chain is Large ribosomal subunit protein uL5 from Geobacter sulfurreducens (strain ATCC 51573 / DSM 12127 / PCA).